Reading from the N-terminus, the 461-residue chain is Putative cytochrome P450 132 (461 aa).

Cys409 is a binding site for heme.

Belongs to the cytochrome P450 family. Requires heme as cofactor.

In Mycobacterium tuberculosis (strain ATCC 25618 / H37Rv), this protein is Putative cytochrome P450 132 (cyp132).